Consider the following 426-residue polypeptide: MNNLKNLRGTVDLFPDQLIKWQNVEKILLEQLSRASIKEIRTPILEMTELFIRGIGEGTDVVSKEMYTFLDRGERSCTLRPEGTASVARALIQNGISSNPIQKLWYMGPMFRYERPQAGRQRQFHQLGVEFIGHDSVRSDVEIIALAWDILRKLGIKELNLEINTLGDTNDRSNFQKSFLKWLETNKDSLDLDSQNRISKNPLRILDSKNIQTKKVLENAPRLFNFLSEKSHNRYLDLKRQLEVLKIPYVENFNLVRGLDYYTHTAFEITSGALGSQATVCGGGRYDDLIKQMGGPNTPAIGFAIGLERLILLAGKELEIPRNTDIYIINKGLVAESLAMDLSRKLRNYDLLVELDLSGASFSKQFKKANKLKSKSIIVIGEDEAVNGEFIIRLFDQSGNGNEEEVISFENDIKLENWINNNLLVK.

It belongs to the class-II aminoacyl-tRNA synthetase family. In terms of assembly, homodimer.

It localises to the cytoplasm. It catalyses the reaction tRNA(His) + L-histidine + ATP = L-histidyl-tRNA(His) + AMP + diphosphate + H(+). This Prochlorococcus marinus (strain AS9601) protein is Histidine--tRNA ligase.